A 292-amino-acid chain; its full sequence is Ribosomal protein L11 methyltransferase (292 aa).

Residues T136, G159, D181, and N228 each contribute to the S-adenosyl-L-methionine site.

The protein belongs to the methyltransferase superfamily. PrmA family.

It localises to the cytoplasm. It carries out the reaction L-lysyl-[protein] + 3 S-adenosyl-L-methionine = N(6),N(6),N(6)-trimethyl-L-lysyl-[protein] + 3 S-adenosyl-L-homocysteine + 3 H(+). In terms of biological role, methylates ribosomal protein L11. This is Ribosomal protein L11 methyltransferase from Agrobacterium fabrum (strain C58 / ATCC 33970) (Agrobacterium tumefaciens (strain C58)).